The following is a 176-amino-acid chain: Cytochrome b (176 aa).

3 helical membrane passes run 33-53, 77-98, and 113-133; these read FGSL…FLAM, WLLR…YLHV, and WNVG…GYVL. Heme b contacts are provided by H83 and H97.

It belongs to the cytochrome b family. The cytochrome bc1 complex contains 11 subunits: 3 respiratory subunits (MT-CYB, CYC1 and UQCRFS1), 2 core proteins (UQCRC1 and UQCRC2) and 6 low-molecular weight proteins (UQCRH/QCR6, UQCRB/QCR7, UQCRQ/QCR8, UQCR10/QCR9, UQCR11/QCR10 and a cleavage product of UQCRFS1). This cytochrome bc1 complex then forms a dimer. Heme b serves as cofactor.

The protein resides in the mitochondrion inner membrane. Functionally, component of the ubiquinol-cytochrome c reductase complex (complex III or cytochrome b-c1 complex) that is part of the mitochondrial respiratory chain. The b-c1 complex mediates electron transfer from ubiquinol to cytochrome c. Contributes to the generation of a proton gradient across the mitochondrial membrane that is then used for ATP synthesis. The polypeptide is Cytochrome b (MT-CYB) (Tadarida brasiliensis (Brazilian free-tailed bat)).